An 89-amino-acid polypeptide reads, in one-letter code: Small ribosomal subunit protein bS20 (89 aa).

Basic and acidic residues predominate over residues 1 to 11 (MANHKSAEKRN). The disordered stretch occupies residues 1–30 (MANHKSAEKRNRQNQVARLRNKSTRTAMKN).

The protein belongs to the bacterial ribosomal protein bS20 family.

Its function is as follows. Binds directly to 16S ribosomal RNA. The sequence is that of Small ribosomal subunit protein bS20 from Desulfotalea psychrophila (strain LSv54 / DSM 12343).